The sequence spans 308 residues: HTH-type transcriptional activator AllS (308 aa).

Residues 2-59 enclose the HTH lysR-type domain; that stretch reads FDPETLRTFISVAETGSFSKAAERLCKTTATISYRIKLLEENTGVGLFFRTTRSVSLT. The segment at residues 19-38 is a DNA-binding region (H-T-H motif); sequence FSKAAERLCKTTATISYRIK.

Belongs to the LysR transcriptional regulatory family.

Positive regulator essential for the expression of allD operon. Binds to the allD promoter. This Salmonella paratyphi A (strain ATCC 9150 / SARB42) protein is HTH-type transcriptional activator AllS (allS).